The following is a 187-amino-acid chain: MALRLSVSSSHGPASSPAISTCRPAACGRFPALLGGGVASQRRSLTVVSGPETRAVIPVRSSGSDTATVGAEAEAVAVTGQVTEVNKDTFWPIVKSAGPKVVVLDMYTQWCGPCKVMAPKFQEMSEKDQDVVFLKLDCNQDNKSLAKELGIKVVPTFKILKDGKVVKEVTGAKLDELIQAIETVKSS.

Residues 1-72 (MALRLSVSSS…GSDTATVGAE (72 aa)) constitute a chloroplast transit peptide. Positions 73-186 (AEAVAVTGQV…LIQAIETVKS (114 aa)) constitute a Thioredoxin domain. Active-site nucleophile residues include Cys111 and Cys114. A disulfide bond links Cys111 and Cys114.

The protein belongs to the thioredoxin family. Plant F-type subfamily.

Its subcellular location is the plastid. The protein localises to the chloroplast. Its function is as follows. Thiol-disulfide oxidoreductase involved in the redox regulation of enzymes of both reductive pentose phosphate pathway (Calvin-Benson cycle) and oxidative pentose phosphate pathway. The protein is Thioredoxin F, chloroplastic of Oryza sativa subsp. japonica (Rice).